Here is a 239-residue protein sequence, read N- to C-terminus: Proteasome subunit beta (239 aa).

A compositionally biased stretch (polar residues) spans 1-16; the sequence is MRQPDSSLPRTGQDHT. A disordered region spans residues 1–32; the sequence is MRQPDSSLPRTGQDHTLSPYEPELGEVPSNDL. Positions 1-44 are cleaved as a propeptide — removed in mature form; by autocatalysis; the sequence is MRQPDSSLPRTGQDHTLSPYEPELGEVPSNDLSMADLDNVNKTG. Residue T45 is the Nucleophile of the active site.

The protein belongs to the peptidase T1B family. As to quaternary structure, the 20S proteasome core is composed of 14 alpha and 14 beta subunits that assemble into four stacked heptameric rings, resulting in a barrel-shaped structure. The two inner rings, each composed of seven catalytic beta subunits, are sandwiched by two outer rings, each composed of seven alpha subunits. The catalytic chamber with the active sites is on the inside of the barrel. Has a gated structure, the ends of the cylinder being occluded by the N-termini of the alpha-subunits. Is capped at one or both ends by the proteasome regulatory ATPase, PAN.

Its subcellular location is the cytoplasm. It carries out the reaction Cleavage of peptide bonds with very broad specificity.. The formation of the proteasomal ATPase PAN-20S proteasome complex, via the docking of the C-termini of PAN into the intersubunit pockets in the alpha-rings, triggers opening of the gate for substrate entry. Interconversion between the open-gate and close-gate conformations leads to a dynamic regulation of the 20S proteasome proteolysis activity. Its function is as follows. Component of the proteasome core, a large protease complex with broad specificity involved in protein degradation. This Natronomonas pharaonis (strain ATCC 35678 / DSM 2160 / CIP 103997 / JCM 8858 / NBRC 14720 / NCIMB 2260 / Gabara) (Halobacterium pharaonis) protein is Proteasome subunit beta.